Consider the following 490-residue polypeptide: Cobyric acid synthase (490 aa).

In terms of domain architecture, GATase cobBQ-type spans 252 to 428 (ARRVAVVRLP…WHGAFEGDAL (177 aa)). C333 serves as the catalytic Nucleophile. Residue H420 is part of the active site.

The protein belongs to the CobB/CobQ family. CobQ subfamily.

It functions in the pathway cofactor biosynthesis; adenosylcobalamin biosynthesis. Its function is as follows. Catalyzes amidations at positions B, D, E, and G on adenosylcobyrinic A,C-diamide. NH(2) groups are provided by glutamine, and one molecule of ATP is hydrogenolyzed for each amidation. This is Cobyric acid synthase from Mycolicibacterium vanbaalenii (strain DSM 7251 / JCM 13017 / BCRC 16820 / KCTC 9966 / NRRL B-24157 / PYR-1) (Mycobacterium vanbaalenii).